Reading from the N-terminus, the 389-residue chain is POU domain, class 5, transcription factor 3 (389 aa).

2 stretches are compositionally biased toward low complexity: residues methionine 1 to aspartate 18 and leucine 145 to serine 165. Disordered regions lie at residues methionine 1–alanine 88 and leucine 145–glutamate 177. Acidic residues predominate over residues serine 167–glutamate 177. The region spanning glutamate 170–glutamate 244 is the POU-specific domain. A DNA-binding region (homeobox) is located at residues lysine 264–leucine 323.

It belongs to the POU transcription factor family.

The protein resides in the nucleus. Functionally, required for the maintenance of pluripotency and self-renewal of embryonic stem cells. Transcriptional activator that binds the DNA consensus sequence 5'-ATGCAAAT-3'. The protein is POU domain, class 5, transcription factor 3 (POU5F3) of Gallus gallus (Chicken).